The sequence spans 199 residues: Shikimate kinase (199 aa).

34 to 39 (GAGKTA) serves as a coordination point for ATP. A Mg(2+)-binding site is contributed by Thr38. Substrate is bound by residues Asp56, Arg80, and Gly102. Arg140 provides a ligand contact to ATP. A substrate-binding site is contributed by Arg159.

It belongs to the shikimate kinase family. As to quaternary structure, monomer. Mg(2+) serves as cofactor.

The protein resides in the cytoplasm. The catalysed reaction is shikimate + ATP = 3-phosphoshikimate + ADP + H(+). It participates in metabolic intermediate biosynthesis; chorismate biosynthesis; chorismate from D-erythrose 4-phosphate and phosphoenolpyruvate: step 5/7. Functionally, catalyzes the specific phosphorylation of the 3-hydroxyl group of shikimic acid using ATP as a cosubstrate. The protein is Shikimate kinase of Cereibacter sphaeroides (strain ATCC 17023 / DSM 158 / JCM 6121 / CCUG 31486 / LMG 2827 / NBRC 12203 / NCIMB 8253 / ATH 2.4.1.) (Rhodobacter sphaeroides).